We begin with the raw amino-acid sequence, 184 residues long: Histone H3-like centromeric protein CSE4 (184 aa).

Positions 54–81 (YIQPERSASSQQIHPPEHHISAHERITK) are disordered. Residues 68–80 (PPEHHISAHERIT) show a composition bias toward basic and acidic residues. The segment at 82–182 (ARGTRYKPTD…MQLARRIRGQ (101 aa)) is H3-like.

The protein belongs to the histone H3 family. Component of centromeric nucleosomes, where DNA is wrapped around a histone octamer core. The octamer contains two molecules each of H2A, H2B, CSE4/CENPA and H4 assembled in one CSE4-H4 heterotetramer and two H2A-H2B heterodimers. Interacts with the inner kinetochore. Ubiquitinated. Is degraded through ubiquitin-mediated proteolysis when not protected by its association to the kinetochore.

Its subcellular location is the nucleus. The protein localises to the chromosome. It is found in the centromere. Functionally, histone H3-like nucleosomal protein that is specifically found in centromeric nucleosomes. Replaces conventional H3 in the nucleosome core of centromeric chromatin that serves as an assembly site for the inner kinetochore. Required for recruitment and assembly of kinetochore proteins, mitotic progression and chromosome segregation. May serve as an epigenetic mark that propagates centromere identity through replication and cell division. In Kluyveromyces lactis (strain ATCC 8585 / CBS 2359 / DSM 70799 / NBRC 1267 / NRRL Y-1140 / WM37) (Yeast), this protein is Histone H3-like centromeric protein CSE4 (CSE4).